A 294-amino-acid polypeptide reads, in one-letter code: Melanocortin receptor 5 (294 aa).

The Extracellular portion of the chain corresponds to 1 to 29; sequence FLDLQLNATEGNVSGPSVGNTSSPCEDMG. 3 N-linked (GlcNAc...) asparagine glycosylation sites follow: Asn-7, Asn-12, and Asn-20. A helical membrane pass occupies residues 30-53; the sequence is IEVEVFLTLGLISLLENILVIGAI. Residues 54–65 are Cytoplasmic-facing; it reads ARNKNLHVPMYF. The chain crosses the membrane as a helical span at residues 66–89; the sequence is FVCSLAVADMLVSLSNSWETITIY. At 90–106 the chain is on the extracellular side; it reads LIANKHLVLSDTSVRHL. A helical membrane pass occupies residues 107-130; the sequence is DNVFDSMICISLVASMCSLLAVAV. The Cytoplasmic portion of the chain corresponds to 131-147; the sequence is DRYVTIFYALRYQHLMT. Residues 148-171 form a helical membrane-spanning segment; that stretch reads GRRCGAIIAGIWALCTGCGPVFIV. The Extracellular segment spans residues 172 to 178; sequence YYESTYV. Residues 179–203 form a helical membrane-spanning segment; sequence VVCLVAMFLTMLLLMASLYAHMFLQ. Topologically, residues 204 to 231 are cytoplasmic; the sequence is ARAHVRRIAALPGYRSARQRTSMKGAVT. The helical transmembrane segment at 232-257 threads the bilayer; that stretch reads LAMLLGVFIVCWAPFFLHLILMISCP. The Extracellular portion of the chain corresponds to 258–265; it reads QNLYCSCF. A helical membrane pass occupies residues 266–289; sequence MSHFNMYLILIMCNSVIDPLIYAF. Over 290–294 the chain is Cytoplasmic; it reads RSQEK.

This sequence belongs to the G-protein coupled receptor 1 family.

It localises to the cell membrane. In terms of biological role, receptor for MSH (alpha, beta and gamma) and ACTH. The activity of this receptor is mediated by G proteins which activate adenylate cyclase. This receptor is a possible mediator of the immunomodulation properties of melanocortins. The chain is Melanocortin receptor 5 (MC5R) from Sus scrofa (Pig).